The following is a 164-amino-acid chain: Putative ankyrin repeat protein RBE_0585 (164 aa).

ANK repeat units follow at residues 42–107 (NQDT…VAIL) and 126–149 (DKDT…MLDY).

The protein is Putative ankyrin repeat protein RBE_0585 of Rickettsia bellii (strain RML369-C).